Reading from the N-terminus, the 147-residue chain is Epididymal secretory protein E3-alpha (147 aa).

The N-terminal stretch at 1–25 (MTSSLKIWGILLALLCILCRLCVYS) is a signal peptide.

As to expression, epididymis, with predominant expression in the corpus region. Moderately expressed in the vas deferens; only low levels are detectable in the caput and cauda regions.

The protein localises to the secreted. Functionally, possible function in sperm maturation. This chain is Epididymal secretory protein E3-alpha (EDDM3A), found in Homo sapiens (Human).